The primary structure comprises 340 residues: UPF0324 membrane protein BC_5174 (340 aa).

Transmembrane regions (helical) follow at residues 13 to 35 (FGFS…LAEL), 40 to 59 (IMGQ…AAIG), 99 to 118 (VLVI…YGLT), 128 to 150 (GILT…APQV), 157 to 179 (TAVG…TLLY), 189 to 211 (YGVF…APGG), 218 to 240 (AVIV…GLWF), 255 to 277 (LPIP…GIIP), 279 to 301 (VVAG…GLGL), and 316 to 338 (FVAG…YALG).

Belongs to the UPF0324 family.

The protein resides in the cell membrane. The sequence is that of UPF0324 membrane protein BC_5174 from Bacillus cereus (strain ATCC 14579 / DSM 31 / CCUG 7414 / JCM 2152 / NBRC 15305 / NCIMB 9373 / NCTC 2599 / NRRL B-3711).